Reading from the N-terminus, the 260-residue chain is Deoxyribonuclease-1 (260 aa).

A glycan (N-linked (GlcNAc...) asparagine) is linked at Asn-18. Glu-78 is a catalytic residue. Residues Cys-101 and Cys-104 are joined by a disulfide bond. His-134 is a catalytic residue. The cysteines at positions 173 and 209 are disulfide-linked.

This sequence belongs to the DNase I family. It depends on Ca(2+) as a cofactor. The cofactor is Mg(2+).

It is found in the secreted. The protein localises to the zymogen granule. The protein resides in the nucleus envelope. It carries out the reaction Endonucleolytic cleavage to 5'-phosphodinucleotide and 5'-phosphooligonucleotide end-products.. In terms of biological role, serum endocuclease secreted into body fluids by a wide variety of exocrine and endocrine organs. Expressed by non-hematopoietic tissues and preferentially cleaves protein-free DNA. Among other functions, seems to be involved in cell death by apoptosis. Binds specifically to G-actin and blocks actin polymerization. Together with DNASE1L3, plays a key role in degrading neutrophil extracellular traps (NETs). NETs are mainly composed of DNA fibers and are released by neutrophils to bind pathogens during inflammation. Degradation of intravascular NETs by DNASE1 and DNASE1L3 is required to prevent formation of clots that obstruct blood vessels and cause organ damage following inflammation. The protein is Deoxyribonuclease-1 (DNASE1) of Ovis aries (Sheep).